A 362-amino-acid polypeptide reads, in one-letter code: Cationic peroxidase SPC4 (362 aa).

The first 31 residues, 1–31 (MSRAPTLAAAAAVAAVVLICSSSTATAADGN), serve as a signal peptide directing secretion. 4 cysteine pairs are disulfide-bonded: Cys50–Cys131, Cys83–Cys88, Cys138–Cys333, and Cys218–Cys245. His81 functions as the Proton acceptor in the catalytic mechanism. 5 residues coordinate Ca(2+): Asp82, Val85, Gly87, Asp89, and Ser91. A glycan (N-linked (GlcNAc...) asparagine) is linked at Asn109. Thr111 is a binding site for (indol-3-yl)acetate. Pro181 lines the substrate pocket. His211 is a binding site for heme b. Ca(2+) is bound at residue Thr212. The N-linked (GlcNAc...) asparagine glycan is linked to Asn234. 4 residues coordinate Ca(2+): Asp257, Thr260, Ala263, and Asp265. Residue Asn332 is glycosylated (N-linked (GlcNAc...) asparagine).

It belongs to the peroxidase family. Classical plant (class III) peroxidase subfamily. In terms of assembly, monomer. It depends on heme b as a cofactor. Ca(2+) is required as a cofactor. In terms of processing, the proportions of glycoforms I and II are 35% and 65% respectively. In terms of tissue distribution, present in germinated and ungerminated grain, seedlings, and leaves and stem of the mature plant.

The protein localises to the secreted. The catalysed reaction is 2 a phenolic donor + H2O2 = 2 a phenolic radical donor + 2 H2O. Its function is as follows. Removal of H(2)O(2), oxidation of toxic reductants, biosynthesis and degradation of lignin, suberization, auxin catabolism, response to environmental stresses such as wounding, pathogen attack and oxidative stress. These functions might be dependent on each isozyme/isoform in each plant tissue. Has a high preference for hydroxycinnamates as substrates. Substrate preference is ferulic acid &gt; p-coumaric acid &gt; N-acetyl tyrosine methyl ester &gt; N-acetyl-tyrosine &gt; tyrosine &gt; catechol &gt; Gly-Tyr-Gly. May be involved in the formation of diferulate linkages in the plant cell wall. This chain is Cationic peroxidase SPC4, found in Sorghum bicolor (Sorghum).